A 114-amino-acid chain; its full sequence is UPF0342 protein NWMN_1737 (114 aa).

The protein belongs to the UPF0342 family.

The polypeptide is UPF0342 protein NWMN_1737 (Staphylococcus aureus (strain Newman)).